A 620-amino-acid chain; its full sequence is Altered inheritance of mitochondria protein 9, mitochondrial (620 aa).

The transit peptide at 1-35 (MLSRVARNSSLLKQLPKLRQTTVLPVVLKNSIRFH) directs the protein to the mitochondrion.

This sequence belongs to the AIM9 family.

The protein resides in the mitochondrion. This Candida tropicalis (strain ATCC MYA-3404 / T1) (Yeast) protein is Altered inheritance of mitochondria protein 9, mitochondrial (AIM9).